The sequence spans 382 residues: ATP phosphoribosyltransferase regulatory subunit (382 aa).

The protein belongs to the class-II aminoacyl-tRNA synthetase family. HisZ subfamily. In terms of assembly, heteromultimer composed of HisG and HisZ subunits.

The protein localises to the cytoplasm. It functions in the pathway amino-acid biosynthesis; L-histidine biosynthesis; L-histidine from 5-phospho-alpha-D-ribose 1-diphosphate: step 1/9. Functionally, required for the first step of histidine biosynthesis. May allow the feedback regulation of ATP phosphoribosyltransferase activity by histidine. The chain is ATP phosphoribosyltransferase regulatory subunit from Burkholderia pseudomallei (strain 1106a).